We begin with the raw amino-acid sequence, 185 residues long: Ribosome-recycling factor (185 aa).

It belongs to the RRF family.

It is found in the cytoplasm. In terms of biological role, responsible for the release of ribosomes from messenger RNA at the termination of protein biosynthesis. May increase the efficiency of translation by recycling ribosomes from one round of translation to another. This is Ribosome-recycling factor from Klebsiella pneumoniae (strain 342).